The primary structure comprises 492 residues: Probable cytochrome P450 313a1 (492 aa).

Cysteine 438 provides a ligand contact to heme.

This sequence belongs to the cytochrome P450 family. Requires heme as cofactor.

Its subcellular location is the endoplasmic reticulum membrane. The protein localises to the microsome membrane. In terms of biological role, may be involved in the metabolism of insect hormones and in the breakdown of synthetic insecticides. The sequence is that of Probable cytochrome P450 313a1 (Cyp313a1) from Drosophila melanogaster (Fruit fly).